The sequence spans 665 residues: Dystrophia myotonica WD repeat-containing protein (665 aa).

The segment covering methionine 1–glycine 11 has biased composition (gly residues). Disordered stretches follow at residues methionine 1 to proline 91 and leucine 100 to glycine 119. Alanine 2 carries the post-translational modification N-acetylalanine. A compositionally biased stretch (pro residues) spans proline 52–proline 64. Over residues alanine 65–alanine 76 the composition is skewed to low complexity. Residues serine 77–alanine 89 are compositionally biased toward pro residues. WD repeat units follow at residues isoleucine 208–proline 248, valine 279–leucine 318, serine 321–arginine 360, and glycine 363–histidine 445. Disordered stretches follow at residues alanine 380 to leucine 413, proline 446 to proline 506, arginine 524 to leucine 564, and aspartate 628 to valine 665. Low complexity predominate over residues arginine 450 to proline 491. Residue serine 487 is modified to Phosphoserine. The residue at position 543 (arginine 543) is an Omega-N-methylarginine. The stretch at isoleucine 592–glutamate 629 is one WD 5 repeat. Residues glutamine 634 to lysine 646 show a composition bias toward polar residues. Over residues serine 653 to valine 665 the composition is skewed to low complexity.

As to quaternary structure, component of the USP12/DMWD/WDR48 deubiquitinating complex. Interacts with USP12; promotes its enzymatic activity. Interacts with USP46. Widely expressed in brain where it localizes to the olfactory bulb, forebrain, thalamus, hippocampus, cerebellum, cortex and hypothalamus (at protein level). Expression seems to be particularly strong in areas of high synaptic density such as the glomerular layer of the olfactory bulb, and mossy fiber terminal fields of the hippocampus (at protein level). Expressed in retina, with strongest expression in the external and internal plexiform layers (at protein level). Strongly expressed in brain and testis. Also detected at lower levels in heart, kidney, liver, lung, ovary, uterus, bladder and skeletal muscle. In testis, expression seems to be restricted to secondary spermatocytes.

The protein resides in the cytoplasm. The protein localises to the nucleus. Its subcellular location is the perikaryon. It is found in the cell projection. It localises to the dendrite. Functionally, regulator of the deubiquitinating USP12/DMWD/WDR48 complex. Functions as a cofactor that promotes USP12 enzymatic activity. The protein is Dystrophia myotonica WD repeat-containing protein (Dmwd) of Mus musculus (Mouse).